A 767-amino-acid polypeptide reads, in one-letter code: DNA topoisomerase 1 (767 aa).

Basic and acidic residues predominate over residues 1–23; it reads MSGDHLHNDSQIEADFRLNDSHK. Positions 1 to 201 are disordered; that stretch reads MSGDHLHNDS…NKKKKPKKEE (201 aa). Residue S2 is modified to N-acetylserine. S2 and S10 each carry phosphoserine. The span at 24–39 shows a compositional bias: basic residues; sequence HKDKHKDREHRHKEHK. Residues 40–110 show a composition bias toward basic and acidic residues; the sequence is KDKDKDREKS…DAKIKKEKEN (71 aa). S59 bears the Phosphoserine mark. K103 is covalently cross-linked (Glycyl lysine isopeptide (Lys-Gly) (interchain with G-Cter in SUMO2)). K105 participates in a covalent cross-link: Glycyl lysine isopeptide (Lys-Gly) (interchain with G-Cter in SUMO); alternate. Residue K105 forms a Glycyl lysine isopeptide (Lys-Gly) (interchain with G-Cter in SUMO2); alternate linkage. S114 is subject to Phosphoserine. K119 is covalently cross-linked (Glycyl lysine isopeptide (Lys-Gly) (interchain with G-Cter in SUMO); alternate). K119 participates in a covalent cross-link: Glycyl lysine isopeptide (Lys-Gly) (interchain with G-Cter in SUMO2); alternate. Residue K119 forms a Glycyl lysine isopeptide (Lys-Gly) (interchain with G-Cter in SUMO1); alternate linkage. Positions 131–168 are enriched in basic and acidic residues; that stretch reads PKEDIKPLKRLRDEDDADYKPKKIKTEDIKKEKKRKSE. Residues K136 and K150 each participate in a glycyl lysine isopeptide (Lys-Gly) (interchain with G-Cter in SUMO2) cross-link. A Glycyl lysine isopeptide (Lys-Gly) (interchain with G-Cter in SUMO); alternate cross-link involves residue K155. Residue K155 forms a Glycyl lysine isopeptide (Lys-Gly) (interchain with G-Cter in SUMO2); alternate linkage. Residues K160 and K166 each participate in a glycyl lysine isopeptide (Lys-Gly) (interchain with G-Cter in SUMO2) cross-link. K174 participates in a covalent cross-link: Glycyl lysine isopeptide (Lys-Gly) (interchain with G-Cter in SUMO2); alternate. K174 carries the post-translational modification N6-acetyllysine; alternate. Residues 181–201 show a composition bias toward basic and acidic residues; sequence KDKDKKVAEPDNKKKKPKKEE. K206 participates in a covalent cross-link: Glycyl lysine isopeptide (Lys-Gly) (interchain with G-Cter in SUMO2). An N6-acetyllysine modification is found at K282. A Glycyl lysine isopeptide (Lys-Gly) (interchain with G-Cter in SUMO2) cross-link involves residue K338. Interaction with DNA stretches follow at residues 427–428 and 490–495; these read KY and RAGNEK. The 334-residue stretch at 434–767 folds into the Topo IB-type catalytic domain; that stretch reads SSRIKGEKDW…IDMTDEDYEF (334 aa). A Phosphoserine; by CK2 modification is found at S508. K551 participates in a covalent cross-link: Glycyl lysine isopeptide (Lys-Gly) (interchain with G-Cter in SUMO2). Residues 587–589 are interaction with DNA; the sequence is TAK. Residues K644, K702, and K714 each participate in a glycyl lysine isopeptide (Lys-Gly) (interchain with G-Cter in SUMO2) cross-link. The active-site O-(3'-phospho-DNA)-tyrosine intermediate is the Y725.

Belongs to the type IB topoisomerase family. As to quaternary structure, monomer. Interacts with ERCC6. Interacts with TPRN; TPRN interacts with a number of DNA damage response proteins, is recruited to sites of DNA damage and may play a role in DNA damage repair. In terms of processing, sumoylated. Lys-119 is the main site of sumoylation. Sumoylation plays a role in partitioning TOP1 between nucleoli and nucleoplasm. Levels are dramatically increased on camptothecin (CPT) treatment. Post-translationally, phosphorylation at Ser-508 by CK2 increases binding to supercoiled DNA and sensitivity to camptothecin.

It localises to the nucleus. It is found in the nucleolus. The protein resides in the nucleoplasm. The enzyme catalyses ATP-independent breakage of single-stranded DNA, followed by passage and rejoining.. In terms of biological role, releases the supercoiling and torsional tension of DNA introduced during the DNA replication and transcription by transiently cleaving and rejoining one strand of the DNA duplex. Introduces a single-strand break via transesterification at a target site in duplex DNA. The scissile phosphodiester is attacked by the catalytic tyrosine of the enzyme, resulting in the formation of a DNA-(3'-phosphotyrosyl)-enzyme intermediate and the expulsion of a 5'-OH DNA strand. The free DNA strand then rotates around the intact phosphodiester bond on the opposing strand, thus removing DNA supercoils. Finally, in the religation step, the DNA 5'-OH attacks the covalent intermediate to expel the active-site tyrosine and restore the DNA phosphodiester backbone. Regulates the alternative splicing of tissue factor (F3) pre-mRNA in endothelial cells. Involved in the circadian transcription of the core circadian clock component BMAL1 by altering the chromatin structure around the ROR response elements (ROREs) on the BMAL1 promoter. In Mus musculus (Mouse), this protein is DNA topoisomerase 1 (Top1).